A 65-amino-acid polypeptide reads, in one-letter code: Neurotoxin BmK AGAP-SYPU2 (65 aa).

Residues 2–64 (KDGYIVDDKN…VPIRVPGRCN (63 aa)) enclose the LCN-type CS-alpha/beta domain. Intrachain disulfides connect cysteine 12/cysteine 63, cysteine 16/cysteine 36, cysteine 22/cysteine 46, and cysteine 26/cysteine 48.

In terms of tissue distribution, expressed by the venom gland.

It localises to the secreted. Functionally, alpha toxins bind voltage-independently at site-3 of sodium channels and inhibit the inactivation of the activated channels, thereby blocking neuronal transmission. In vivo, shows analgesic activity (ED(50) is 1.42 mg/kg) and antitumor activity against Ehrlich ascites tumor and S-180 fibrosarcoma models. The polypeptide is Neurotoxin BmK AGAP-SYPU2 (Olivierus martensii (Manchurian scorpion)).